Consider the following 414-residue polypeptide: eIF5-mimic protein 1 (414 aa).

The interval 1–22 (MNKNQKPVLTGQRFKTRKRDEK) is disordered. A W2 domain is found at 248-414 (VQQSLGTRKE…LQNAEEEFRI (167 aa)).

It belongs to the BZW family.

The protein resides in the cytoplasm. Functionally, translation initiation regulator which may repress non-AUG initiated translation and repeat-associated non-AUG (RAN) initiated translation by acting as a competitive inhibitor of eukaryotic translation initiation factor 5 (EIF5) function. The protein is eIF5-mimic protein 1 (BZW2) of Gallus gallus (Chicken).